Consider the following 231-residue polypeptide: 7-cyano-7-deazaguanine synthase (231 aa).

8–18 (FSGGQDSTTCL) contacts ATP. Residues cysteine 188, cysteine 197, cysteine 200, and cysteine 203 each contribute to the Zn(2+) site.

This sequence belongs to the QueC family. The cofactor is Zn(2+).

It carries out the reaction 7-carboxy-7-deazaguanine + NH4(+) + ATP = 7-cyano-7-deazaguanine + ADP + phosphate + H2O + H(+). It participates in purine metabolism; 7-cyano-7-deazaguanine biosynthesis. In terms of biological role, catalyzes the ATP-dependent conversion of 7-carboxy-7-deazaguanine (CDG) to 7-cyano-7-deazaguanine (preQ(0)). The sequence is that of 7-cyano-7-deazaguanine synthase from Escherichia coli O127:H6 (strain E2348/69 / EPEC).